We begin with the raw amino-acid sequence, 1480 residues long: Cystic fibrosis transmembrane conductance regulator (1480 aa).

The Cytoplasmic portion of the chain corresponds to 1 to 77 (MQRSPLEKAS…KLINALRRCF (77 aa)). A helical transmembrane segment spans residues 78-98 (FWRFMFYGIFLYLGEVTKAVQ). The ABC transmembrane type-1 1 domain occupies 81–365 (FMFYGIFLYL…WAVQTWYDSL (285 aa)). The Extracellular segment spans residues 99-122 (PLLLGRIIASYDPDNKEERSIAIY). Residues 123–146 (LGIGLCLLFIVRTLLLHPAIFGLH) form a helical membrane-spanning segment. Residues 147 to 195 (HIGMQMRIAMFSLIYKKTLKLSSRVLDKISIGQLVSLLSNNLNKFDEGL) lie on the Cytoplasmic side of the membrane. Residues 196–216 (ALAHFVWIAPLQVALLMGLIW) form a helical membrane-spanning segment. Topologically, residues 217-222 (ELLQAS) are extracellular. A helical membrane pass occupies residues 223-243 (AFCGLGFLIVLALFQAGLGRM). At 244 to 298 (MMKYRDQRAGKINERLVITSEMIENIQSVKAYCWEEAMEKMIENLRQTELKLTRK) the chain is on the cytoplasmic side. Residues 299 to 319 (AAYVRYFNSSAFFFSGFFVVF) form a helical membrane-spanning segment. Over 320–339 (LSVLPYALIKGIVLRKIFTT) the chain is Extracellular. The helical transmembrane segment at 340–358 (ISFCIVLRMAVTRQFPWAV) threads the bilayer. At 359–858 (QTWYDSLGAI…YLRYITVHKS (500 aa)) the chain is on the cytoplasmic side. ATP-binding positions include Trp401, Ser434, 458–465 (GSTGAGKT), and Gln493. Residues 423 to 646 (NGDDSLFFSN…RPDFSSKLMG (224 aa)) form the ABC transporter 1 domain. A lipid anchor (S-palmitoyl cysteine) is attached at Cys524. Phosphoserine occurs at positions 549 and 660. The tract at residues 654–831 (SAERRNSILT…EEINEEDLKE (178 aa)) is disordered R region. Position 670 is a phosphoserine; by PKA (Ser670). A Glycyl lysine isopeptide (Lys-Gly) (interchain with G-Cter in ubiquitin) cross-link involves residue Lys688. Phosphoserine occurs at positions 700 and 712. At Thr717 the chain carries Phosphothreonine. 6 positions are modified to phosphoserine: Ser737, Ser753, Ser768, Ser790, Ser795, and Ser813. The chain crosses the membrane as a helical span at residues 859–879 (LIFVLIWCLVIFLAEVAASLV). Positions 859 to 1155 (LIFVLIWCLV…AVNSSIDVDS (297 aa)) constitute an ABC transmembrane type-1 2 domain. Topologically, residues 880 to 918 (VLWLLGNTPLQDKGNSTHSRNNSYAVIITSTSSYYVFYI) are extracellular. 2 N-linked (GlcNAc...) asparagine glycosylation sites follow: Asn894 and Asn900. Residues 919 to 939 (YVGVADTLLAMGFFRGLPLVH) traverse the membrane as a discontinuously helical segment. At 940–990 (TLITVSKILHNKMLHSVLQAPMSTLNTLKAGGILNRFSKDIAILDDLLPLT) the chain is on the cytoplasmic side. A helical membrane pass occupies residues 991–1011 (IFDFIQLLLIVIGAIAVVAVL). Residues 1012–1013 (QP) lie on the Extracellular side of the membrane. The helical transmembrane segment at 1014-1034 (YIFVATVPVIVAFIMLRAYFL) threads the bilayer. Residues 1035–1095 (QTSQQLKQLE…TANWFLYLST (61 aa)) lie on the Cytoplasmic side of the membrane. A helical transmembrane segment spans residues 1096–1116 (LRWFQMRIEMIFVIFFIAVTF). The Extracellular portion of the chain corresponds to 1117–1130 (ISILTTGEGEGRVG). A helical transmembrane segment spans residues 1131–1151 (IILTLAMNIMSTLQWAVNSSI). Residues 1152 to 1480 (DVDSLMRSVS…TEEEVQDTRL (329 aa)) lie on the Cytoplasmic side of the membrane. One can recognise an ABC transporter 2 domain in the interval 1210–1443 (MTVKDLTAKY…RSLFQQAISP (234 aa)). ATP contacts are provided by residues Tyr1219 and 1244–1251 (GRTGSGKS). The interaction with GORASP2 stretch occupies residues 1386–1480 (RTLKQAFADC…TEEEVQDTRL (95 aa)). Cys1395 is lipidated: S-palmitoyl cysteine. 2 positions are modified to phosphoserine: Ser1444 and Ser1456. The segment at 1452 to 1480 (HRNSSKCKSKPQIAALKEETEEEVQDTRL) is disordered. Positions 1470-1480 (ETEEEVQDTRL) are enriched in acidic residues. The PDZ-binding motif lies at 1478–1480 (TRL).

This sequence belongs to the ABC transporter superfamily. ABCC family. CFTR transporter (TC 3.A.1.202) subfamily. As to quaternary structure, monomer; does not require oligomerization for channel activity. May form oligomers in the membrane. Interacts with SLC26A3, SLC26A6 and NHERF1. Interacts with SHANK2. Interacts with MYO6. Interacts (via C-terminus) with GOPC (via PDZ domain); this promotes CFTR internalization and thereby decreases channel activity. Interacts with SLC4A7 through NHERF1. Found in a complex with MYO5B and RAB11A. Interacts with ANO1. Interacts with SLC26A8. Interacts with AHCYL1; the interaction increases CFTR activity. Interacts with CSE1L. The core-glycosylated form interacts with GORASP2 (via PDZ GRASP-type 1 domain) in respone to ER stress. Interacts with MARCHF2; the interaction leads to CFTR ubiqtuitination and degradation. Interacts with ADGRG2. In terms of processing, N-glycosylated. Phosphorylated; cAMP treatment promotes phosphorylation and activates the channel. Dephosphorylation decreases the ATPase activity (in vitro). Phosphorylation at PKA sites activates the channel. Phosphorylation at PKC sites enhances the response to phosphorylation by PKA. Phosphorylated by AMPK; this inhibits channel activity. Post-translationally, ubiquitinated, leading to its degradation in the lysosome. Deubiquitination by USP10 in early endosomes enhances its endocytic recycling to the cell membrane. Ubiquitinated by RNF185 during ER stress. Ubiquitinated by MARCHF2.

It is found in the apical cell membrane. It localises to the early endosome membrane. The protein resides in the cell membrane. Its subcellular location is the recycling endosome membrane. The protein localises to the endoplasmic reticulum membrane. It is found in the nucleus. The catalysed reaction is ATP + H2O + closed Cl(-) channel = ADP + phosphate + open Cl(-) channel.. It carries out the reaction chloride(in) = chloride(out). The enzyme catalyses hydrogencarbonate(in) = hydrogencarbonate(out). It catalyses the reaction ATP + H2O = ADP + phosphate + H(+). Its function is as follows. Epithelial ion channel that plays an important role in the regulation of epithelial ion and water transport and fluid homeostasis. Mediates the transport of chloride ions across the cell membrane. Possesses an intrinsic ATPase activity and utilizes ATP to gate its channel; the passive flow of anions through the channel is gated by cycles of ATP binding and hydrolysis by the ATP-binding domains. The ion channel is also permeable to HCO(3)(-); selectivity depends on the extracellular chloride concentration. Exerts its function also by modulating the activity of other ion channels and transporters. Contributes to the regulation of the pH and the ion content of the epithelial fluid layer. Modulates the activity of the epithelial sodium channel (ENaC) complex, in part by regulating the cell surface expression of the ENaC complex. May regulate bicarbonate secretion and salvage in epithelial cells by regulating the transporter SLC4A7. Can inhibit the chloride channel activity of ANO1. Plays a role in the chloride and bicarbonate homeostasis during sperm epididymal maturation and capacitation. This is Cystic fibrosis transmembrane conductance regulator from Pongo abelii (Sumatran orangutan).